The primary structure comprises 212 residues: Cytochrome c biogenesis ATP-binding export protein CcmA (212 aa).

Residues 8-212 form the ABC transporter domain; that stretch reads LQATALACER…RSIDLAKGSA (205 aa). Residue 40 to 47 participates in ATP binding; it reads GPNGSGKT.

The protein belongs to the ABC transporter superfamily. CcmA exporter (TC 3.A.1.107) family. As to quaternary structure, the complex is composed of two ATP-binding proteins (CcmA) and two transmembrane proteins (CcmB).

It localises to the cell inner membrane. The catalysed reaction is heme b(in) + ATP + H2O = heme b(out) + ADP + phosphate + H(+). Part of the ABC transporter complex CcmAB involved in the biogenesis of c-type cytochromes; once thought to export heme, this seems not to be the case, but its exact role is uncertain. Responsible for energy coupling to the transport system. This Pseudomonas syringae pv. tomato (strain ATCC BAA-871 / DC3000) protein is Cytochrome c biogenesis ATP-binding export protein CcmA.